The chain runs to 236 residues: Ascorbate-specific transmembrane electron transporter 1 (236 aa).

At 1–11 the chain is on the cytoplasmic side; sequence MGLGLGVRAAP. The chain crosses the membrane as a helical span at residues 12-32; it reads FTYAAHALAVAAAAMVLVWSI. The 205-residue stretch at 15-219 folds into the Cytochrome b561 domain; that stretch reads AAHALAVAAA…FGASVVVAAI (205 aa). Residues 33 to 50 are Extracellular-facing; that stretch reads QFRGGLAIESTNKNLIFN. The helical transmembrane segment at 51–71 threads the bilayer; that stretch reads VHPVLMLIGYVIIGGEAIMVY. His52 is a heme b binding site. 67–75 lines the L-ascorbate pocket; sequence AIMVYRVLP. Over 72-84 the chain is Cytoplasmic; it reads RVLPTSNHDTTKL. Residues 85 to 105 form a helical membrane-spanning segment; that stretch reads IHLILHGIALVLGAVGIYFAF. Heme b-binding residues include His86 and His120. Residues 106-122 are Extracellular-facing; it reads KNHNESGIANLYSLHSW. 116–125 is a monodehydro-L-ascorbate radical binding site; the sequence is LYSLHSWIGI. The chain crosses the membrane as a helical span at residues 123 to 143; sequence IGIGTITLYGIQWIIGFVTFF. The Cytoplasmic portion of the chain corresponds to 144 to 153; sequence FPGAAPNVKK. A helical membrane pass occupies residues 154-174; that stretch reads GVLPWHVLFGLFVYILALANA. Heme b is bound at residue His159. Residues 175–201 lie on the Extracellular side of the membrane; sequence ELGFLEKLTFLESSGLDKYGTEAFLVN. Residues 202–222 traverse the membrane as a helical segment; that stretch reads FTALVVVLFGASVVVAAIAPV. Topologically, residues 223–236 are cytoplasmic; sequence RLEEPQGYDPIPEN.

Heme b is required as a cofactor.

The protein localises to the membrane. Inhibited by diethylpyrocarbonate. In terms of biological role, two-heme-containing cytochrome. Catalyzes ascorbate-dependent trans-membrane electron transfer by utilizing a concerted H(+)/e(-) transfer mechanism. The sequence is that of Ascorbate-specific transmembrane electron transporter 1 (ZCYB) from Zea mays (Maize).